We begin with the raw amino-acid sequence, 126 residues long: Small ribosomal subunit protein uS12 (126 aa).

Asp-89 bears the 3-methylthioaspartic acid mark.

Belongs to the universal ribosomal protein uS12 family. In terms of assembly, part of the 30S ribosomal subunit. Contacts proteins S8 and S17. May interact with IF1 in the 30S initiation complex.

In terms of biological role, with S4 and S5 plays an important role in translational accuracy. Functionally, interacts with and stabilizes bases of the 16S rRNA that are involved in tRNA selection in the A site and with the mRNA backbone. Located at the interface of the 30S and 50S subunits, it traverses the body of the 30S subunit contacting proteins on the other side and probably holding the rRNA structure together. The combined cluster of proteins S8, S12 and S17 appears to hold together the shoulder and platform of the 30S subunit. This Carboxydothermus hydrogenoformans (strain ATCC BAA-161 / DSM 6008 / Z-2901) protein is Small ribosomal subunit protein uS12.